We begin with the raw amino-acid sequence, 381 residues long: Regulatory protein RapF (381 aa).

Mn(2+) contacts are provided by leucine 40, methionine 43, and glutamate 45. 6 TPR repeats span residues 101 to 137 (YYFN…VKDR), 148 to 181 (SESY…NIRL), 182 to 215 (LQCH…AEAE), 222 to 255 (GRTL…FEES), 262 to 295 (PQAY…SQKA), and 337 to 370 (EDFA…RQLI).

This sequence belongs to the Rap family. As to quaternary structure, monomer. Is monomeric either alone or in complex with PhrF. Interacts specifically with the C-terminal DNA-binding domain of ComA. Interacts with PhrF.

It localises to the cytoplasm. Its activity is regulated as follows. Inhibited by PhrF, which prevents RapF-ComA interaction. Interaction with PhrF induces a conformational change in RapF, which is propagated to the ComA binding site and causes the dissociation of ComA from RapF. Functionally, involved in the regulation of genetic competence development. Inhibits the activity of ComA, a transcriptional factor that regulates the development of genetic competence. Acts by binding to ComA, leading to the inhibition of its DNA-binding activity. May also affect transcription independently of ComA. The sequence is that of Regulatory protein RapF (rapF) from Bacillus subtilis (strain 168).